A 517-amino-acid chain; its full sequence is Bifunctional purine biosynthesis protein PurH (517 aa).

The MGS-like domain occupies 1–145; sequence MSPLALVSVS…KNHKDVSVLV (145 aa).

Belongs to the PurH family.

It carries out the reaction (6R)-10-formyltetrahydrofolate + 5-amino-1-(5-phospho-beta-D-ribosyl)imidazole-4-carboxamide = 5-formamido-1-(5-phospho-D-ribosyl)imidazole-4-carboxamide + (6S)-5,6,7,8-tetrahydrofolate. It catalyses the reaction IMP + H2O = 5-formamido-1-(5-phospho-D-ribosyl)imidazole-4-carboxamide. It functions in the pathway purine metabolism; IMP biosynthesis via de novo pathway; 5-formamido-1-(5-phospho-D-ribosyl)imidazole-4-carboxamide from 5-amino-1-(5-phospho-D-ribosyl)imidazole-4-carboxamide (10-formyl THF route): step 1/1. Its pathway is purine metabolism; IMP biosynthesis via de novo pathway; IMP from 5-formamido-1-(5-phospho-D-ribosyl)imidazole-4-carboxamide: step 1/1. The protein is Bifunctional purine biosynthesis protein PurH of Prochlorococcus marinus (strain AS9601).